Consider the following 412-residue polypeptide: Peptide chain release factor subunit 1 (412 aa).

This sequence belongs to the eukaryotic release factor 1 family. In terms of assembly, heterodimer of two subunits, one of which binds GTP.

The protein localises to the cytoplasm. Functionally, directs the termination of nascent peptide synthesis (translation) in response to the termination codons UAA, UAG and UGA. This is Peptide chain release factor subunit 1 from Methanobrevibacter smithii (strain ATCC 35061 / DSM 861 / OCM 144 / PS).